Here is a 176-residue protein sequence, read N- to C-terminus: MVTIALGSRNPVKINATKEALDVLKLNWDLIGIEVDSGVDKQPFCDQTYVGARNRALNVIRVTNADIGLGIEGGVCNVYGKFIANAVVYVITKEGLENFAISSSFTLPSSMVSLILQGKELGEASDIIFKTNNSKTKEGAIGLLTNNVINRKMLYVQPIVLALYPIYNTMINNTPF.

Asp-36 provides a ligand contact to Mg(2+).

The protein belongs to the YjjX NTPase family. Homodimer. Requires Mg(2+) as cofactor. Mn(2+) serves as cofactor.

The enzyme catalyses XTP + H2O = XDP + phosphate + H(+). It catalyses the reaction ITP + H2O = IDP + phosphate + H(+). Its function is as follows. Phosphatase that hydrolyzes non-canonical purine nucleotides such as XTP and ITP to their respective diphosphate derivatives. Probably excludes non-canonical purines from DNA/RNA precursor pool, thus preventing their incorporation into DNA/RNA and avoiding chromosomal lesions. The chain is Probable inosine/xanthosine triphosphatase from Saccharolobus islandicus (strain M.16.4 / Kamchatka #3) (Sulfolobus islandicus).